Here is a 107-residue protein sequence, read N- to C-terminus: Glutaredoxin-1 (107 aa).

Residue Ala-2 is modified to N-acetylalanine. The Glutaredoxin domain occupies 3-106; that stretch reads QEFVNCKIQS…TRLKQIGALQ (104 aa). Lys-9 carries the post-translational modification N6-succinyllysine. 2 disulfides stabilise this stretch: Cys-23/Cys-26 and Cys-79/Cys-83.

This sequence belongs to the glutaredoxin family.

It localises to the cytoplasm. Functionally, has a glutathione-disulfide oxidoreductase activity in the presence of NADPH and glutathione reductase. Reduces low molecular weight disulfides and proteins. In Mus musculus (Mouse), this protein is Glutaredoxin-1 (Glrx).